Consider the following 149-residue polypeptide: uncharacterized protein (149 aa).

A coiled-coil region spans residues 111–140 (HKALEKATELIENEEELLKREGIKRENLKF).

This is an uncharacterized protein from Aquifex aeolicus (strain VF5).